The chain runs to 148 residues: uncharacterized protein (148 aa).

The protein resides in the plastid. It localises to the chloroplast. This is an uncharacterized protein from Porphyra purpurea (Red seaweed).